We begin with the raw amino-acid sequence, 117 residues long: Large ribosomal subunit protein bL19 (117 aa).

Belongs to the bacterial ribosomal protein bL19 family.

Functionally, this protein is located at the 30S-50S ribosomal subunit interface and may play a role in the structure and function of the aminoacyl-tRNA binding site. This chain is Large ribosomal subunit protein bL19, found in Photorhabdus laumondii subsp. laumondii (strain DSM 15139 / CIP 105565 / TT01) (Photorhabdus luminescens subsp. laumondii).